Here is a 262-residue protein sequence, read N- to C-terminus: Spindlin-Z (262 aa).

The disordered stretch occupies residues 1–50; that stretch reads MKTPFGKSPGQRSRADAGHAGVSASMMKKRTSHKKHRNNVGPSKPISQPR. Basic residues predominate over residues 27–38; it reads MKKRTSHKKHRN.

The protein belongs to the SPIN/STSY family. Expressed in several tissues including testis.

It is found in the nucleus. Functionally, may play a role in mitosis. This chain is Spindlin-Z (SPINZ), found in Gallus gallus (Chicken).